We begin with the raw amino-acid sequence, 283 residues long: 4-diphosphocytidyl-2-C-methyl-D-erythritol kinase (283 aa).

Lys-10 is an active-site residue. Pro-99–Ser-109 is a binding site for ATP. The active site involves Asp-141.

This sequence belongs to the GHMP kinase family. IspE subfamily. Homodimer.

The catalysed reaction is 4-CDP-2-C-methyl-D-erythritol + ATP = 4-CDP-2-C-methyl-D-erythritol 2-phosphate + ADP + H(+). It participates in isoprenoid biosynthesis; isopentenyl diphosphate biosynthesis via DXP pathway; isopentenyl diphosphate from 1-deoxy-D-xylulose 5-phosphate: step 3/6. Functionally, catalyzes the phosphorylation of the position 2 hydroxy group of 4-diphosphocytidyl-2C-methyl-D-erythritol. The chain is 4-diphosphocytidyl-2-C-methyl-D-erythritol kinase from Shigella dysenteriae serotype 1 (strain Sd197).